Reading from the N-terminus, the 167-residue chain is Periplasmic nitrate reductase, electron transfer subunit (167 aa).

A signal peptide spans 1-34 (MRRAHRAGERVMMKRFGIALLAVAIAAGASSLTA). The tract at residues 40–65 (GLHGPAPLNDEGPAPPMLPNRNTSER) is disordered. Heme c contacts are provided by H79, C93, C96, H97, H114, C133, C136, and H137.

This sequence belongs to the NapB family. Component of the periplasmic nitrate reductase NapAB complex composed of NapA and NapB. Binds 2 heme C groups per subunit.

Its subcellular location is the periplasm. Its function is as follows. Electron transfer subunit of the periplasmic nitrate reductase complex NapAB. Receives electrons from the membrane-anchored tetraheme c-type NapC protein and transfers these to NapA subunit, thus allowing electron flow between membrane and periplasm. Essential for periplasmic nitrate reduction with nitrate as the terminal electron acceptor. The chain is Periplasmic nitrate reductase, electron transfer subunit from Bradyrhizobium japonicum.